Reading from the N-terminus, the 326-residue chain is Pancreas transcription factor 1 subunit alpha (326 aa).

Residues glutamine 162–leucine 214 form the bHLH domain. The segment covering threonine 229–histidine 240 has biased composition (gly residues). 2 disordered regions span residues threonine 229–glutamine 249 and aspartate 304–serine 326.

In terms of assembly, component of the pancreas transcription factor 1 complex (PTF1) which is composed of TCF3/p75, TCF12/p64 and PTF1A/p48. TCF3 is responsible for the nuclear import of the p48/p64 complex. Interacts with TCF3 and RBPSUH/RBP-Jkappa. As to expression, exocrine pancreas-specific. Expressed in azaserine-induced pancreatic tumors (at protein level). Expressed in AR42J cells but not in ARIP, DSL6A, or DSL6B cells. Down-regulation is associated with the change of an azaserine-induced acinar cell carcinoma to a ductal phenotype.

The protein resides in the nucleus. The protein localises to the cytoplasm. Its function is as follows. Transcription factor implicated in the cell fate determination in various organs. Binds to the E-box consensus sequence 5'-CANNTG-3'. Plays a role in early and late pancreas development and differentiation. Important for determining whether cells allocated to the pancreatic buds continue towards pancreatic organogenesis or revert back to duodenal fates. May be involved in the maintenance of exocrine pancreas-specific gene expression including ELA1 and amylase. Required for the formation of pancreatic acinar and ductal cells. Plays an important role in cerebellar development. Directly regulated by FOXN4 and RORC during retinal development, FOXN4-PTF1A pathway plays a central role in directing the differentiation of retinal progenitors towards horizontal and amacrine fates. The protein is Pancreas transcription factor 1 subunit alpha (Ptf1a) of Rattus norvegicus (Rat).